Consider the following 469-residue polypeptide: Glutamine synthetase (469 aa).

The 85-residue stretch at 13–97 folds into the GS beta-grasp domain; it reads KEVRYVDLRF…LRCDIVEPAT (85 aa). In terms of domain architecture, GS catalytic spans 105–469; sequence PRSIAKRAEA…PVEFDMYYSL (365 aa). 2 residues coordinate Mg(2+): glutamate 130 and glutamate 132. Glutamate 208 is a binding site for ATP. Residues glutamate 213 and glutamate 221 each coordinate Mg(2+). L-glutamate-binding positions include 265 to 266 and glycine 266; that span reads NG. Histidine 270 contributes to the Mg(2+) binding site. ATP is bound by residues 272–274 and serine 274; that span reads HQS. Residues arginine 322, glutamate 328, and arginine 340 each coordinate L-glutamate. Arginine 340, arginine 345, and lysine 353 together coordinate ATP. Glutamate 358 contributes to the Mg(2+) binding site. Residue arginine 360 participates in L-glutamate binding. Residue tyrosine 398 is modified to O-AMP-tyrosine.

Belongs to the glutamine synthetase family. Oligomer of 12 subunits arranged in the form of two hexameric ring. Mg(2+) serves as cofactor.

Its subcellular location is the cytoplasm. It catalyses the reaction L-glutamate + NH4(+) + ATP = L-glutamine + ADP + phosphate + H(+). With respect to regulation, the activity of this enzyme could be controlled by adenylation under conditions of abundant glutamine. In terms of biological role, catalyzes the ATP-dependent biosynthesis of glutamine from glutamate and ammonia. In Methylococcus capsulatus (strain ATCC 33009 / NCIMB 11132 / Bath), this protein is Glutamine synthetase.